Reading from the N-terminus, the 618-residue chain is MSLPIPPKFLPPLKSPPIHHHQTPPPLAPPRAAISISIPDTGLGRTGTILDESTSSAFRDYQSLFVSQRSETIEPVVIKPIEGSIPVNFPSGTYYLAGPGLFTDDHGSTVHPLDGHGYLRAFHIDGNKRKATFTAKYVKTEAKKEEHDPVTDTWRFTHRGPFSVLKGGKRFGNTKVMKNVANTSVLKWAGRLLCLWEGGEPYEIESGSLDTVGRFNVENNGCESCDDDDSSDRDLSGHDIWDTAADLLKPILQGVFKMPPKRFLSHYKVDGRRKRLLTVTCNAEDMLLPRSNFTFCEYDSEFKLIQTKEFKIDDHMMIHDWAFTDTHYILFANRVKLNPIGSIAAMCGMSPMVSALSLNPSNESSPIYILPRFSDKYSRGGRDWRVPVEVSSQLWLIHSGNAYETREDNGDLKIQIQASACSYRWFDFQKMFGYDWQSNKLDPSVMNLNRGDDKLLPHLVKVSMTLDSTGNCNSCDVEPLNGWNKPSDFPVINSSWSGKKNKYMYSAASSGTRSELPHFPFDMVVKFDLDSNLVRTWSTGARRFVGEPMFVPKNSVEEGEEEDDGYIVVVEYAVSVERCYLVILDAKKIGESDAVVSRLEVPRNLTFPMGFHGLWASD.

A chloroplast-targeting transit peptide spans 1–31 (MSLPIPPKFLPPLKSPPIHHHQTPPPLAPPR). The disordered stretch occupies residues 11–34 (PPLKSPPIHHHQTPPPLAPPRAAI). Fe cation is bound by residues histidine 266, histidine 319, histidine 398, and histidine 612.

This sequence belongs to the carotenoid oxygenase family. Fe(2+) serves as cofactor. As to expression, expressed in flowers, siliques, inflorescence stems, petiole, leaves and roots.

Its subcellular location is the plastid. It localises to the chloroplast. The enzyme catalyses 9-cis-beta-carotene + O2 = 9-cis-10'-apo-beta-carotenal + beta-ionone. In terms of biological role, involved in strigolactones biosynthesis by cleaving asymmetrically a variety of linear and cyclic carotenoids at the 9-10 double bond. Produces one C(13) beta-ionone and the C(27) 10'-apo-beta-carotenal. Strigolactones are hormones that inhibit tillering and shoot branching through the MAX-dependent pathway, contribute to the regulation of shoot architectural response to phosphate-limiting conditions and function as rhizosphere signal that stimulates hyphal branching of arbuscular mycorrhizal fungi and trigger seed germination of root parasitic weeds. No activity on lycopene, lutein, zeaxanthin, violaxanthin or neoxanthin. Probably not involved in abscisic acid biosynthesis. This chain is Carotenoid cleavage dioxygenase 7, chloroplastic (CCD7), found in Arabidopsis thaliana (Mouse-ear cress).